Here is a 330-residue protein sequence, read N- to C-terminus: Putative protein N-methyltransferase FAM86B1 (330 aa).

S-adenosyl-L-methionine is bound by residues Trp-139, 165 to 167 (GSG), Trp-228, and Ala-247.

This sequence belongs to the class I-like SAM-binding methyltransferase superfamily. EEF2KMT family.

This is Putative protein N-methyltransferase FAM86B1 from Homo sapiens (Human).